We begin with the raw amino-acid sequence, 598 residues long: uncharacterized protein (598 aa).

Ser-46 bears the Phosphoserine mark. In terms of domain architecture, SAC spans 106–441; sequence LQNHLKTGPF…ADYISLSYSG (336 aa). 2 helical membrane-spanning segments follow: residues 508-528 and 535-555; these read TIRC…MTLF and ILPP…SLYY.

It localises to the endoplasmic reticulum membrane. This is an uncharacterized protein from Schizosaccharomyces pombe (strain 972 / ATCC 24843) (Fission yeast).